The following is a 593-amino-acid chain: ATP-dependent RNA helicase MRH4, mitochondrial (593 aa).

The N-terminal 106 residues, 1–106, are a transit peptide targeting the mitochondrion; that stretch reads MFPLRAQSAS…QLRIFPTVRA (106 aa). Over residues 42 to 51 the composition is skewed to low complexity; sequence GANGANRANG. The disordered stretch occupies residues 42-63; the sequence is GANGANRANGTNSSQPESQSSK. Polar residues predominate over residues 52 to 63; sequence TNSSQPESQSSK. The Q motif motif lies at 130–137; sequence VLKPTPIQ. Positions 181–399 constitute a Helicase ATP-binding domain; the sequence is INSLQKLKVF…NRIFPTDDSI (219 aa). Position 194-201 (194-201) interacts with ATP; the sequence is AETGSGKT. Positions 347 to 350 match the DEAD box motif; it reads DEAD. The 161-residue stretch at 433–593 folds into the Helicase C-terminal domain; it reads ALAQALYAIT…NAVKRGIQMG (161 aa).

It belongs to the DEAD box helicase family. MRH4 subfamily.

Its subcellular location is the mitochondrion. It carries out the reaction ATP + H2O = ADP + phosphate + H(+). In terms of biological role, ATP-binding RNA helicase involved in mitochondrial RNA metabolism. Required for maintenance of mitochondrial DNA. This Scheffersomyces stipitis (strain ATCC 58785 / CBS 6054 / NBRC 10063 / NRRL Y-11545) (Yeast) protein is ATP-dependent RNA helicase MRH4, mitochondrial (MRH4).